Consider the following 406-residue polypeptide: DNA-binding transcriptional repressor Mlc (406 aa).

A DNA-binding region (H-T-H motif) is located at residues 33-42 (RIDLSRLAQL). Zn(2+) contacts are provided by H247, C257, C259, and C264.

The protein belongs to the ROK (NagC/XylR) family. As to quaternary structure, homodimer. Homotetramer. There is probably an equilibrium between the dimeric and the tetrameric form. Interacts with dephosphorylated PtsG. Mlc and PtsG EIIB domain form a complex with the 1:1 stoichiometry. Interacts with MtfA.

The protein localises to the cytoplasm. Its activity is regulated as follows. Activity is modulated by glucose. In the presence of glucose, is inhibited by interaction with the dephosphorylated form of PtsG, which sequesters Mlc in the inner membrane and prevents Mlc binding to its target promoters. The restriction of conformational freedom resulting from the anchoring of four ends of Mlc to the membrane could be the primary cause of its loss of DNA-binding activity in vivo. Activity is also inhibited by interaction with the Mlc titration factor A (mtfA). The inactivation mechanisms of Mlc by dephosphorylated PtsG and MtfA differ significantly. Its function is as follows. Global regulator of carbohydrate metabolism. Represses the expression of several genes involved in sugar transport and utilization, in particular phosphoenolpyruvate-carbohydrate phosphotransferase system (PTS) genes. Represses expression of ptsG (EIICB(Glc)), which encodes the PTS system glucose-specific EIICB component. Also represses the expression of the manXYZ operon, encoding the mannose-specific PTS system, expression of malT, encoding the transcriptional activator of the maltose regulon, and expression of the pts operon, composed of the genes ptsH, ptsI and crr. Represses its own expression. Acts by binding to the regulatory region of the target genes. The protein is DNA-binding transcriptional repressor Mlc of Escherichia coli (strain K12).